Here is a 217-residue protein sequence, read N- to C-terminus: MSLVPGQHCSPSHTRLHLTSPITMGTEPATQNTEFSKGSLIYGVTSPQRGHSQHSEASQGPLSLDKPLQLPPIFLEGEKGESSVQNEQEGEPSLQSPSLELQSPAWPRHAGVAQEPLKVSSSYLSDTQSSESHVSSVQHPRPEEGSHASLSSGYAGDKEGSDISLVGSHRRVRLNRRLNTQAASNQTSQLGSIDPPSSLKSRLTGPAHSTKQTGGKE.

The tract at residues 1–217 (MSLVPGQHCS…HSTKQTGGKE (217 aa)) is disordered. 2 stretches are compositionally biased toward polar residues: residues 20-36 (SPIT…TEFS) and 45-61 (TSPQ…SQGP). Composition is skewed to low complexity over residues 91 to 104 (EPSL…LQSP) and 128 to 139 (QSSESHVSSVQH). 2 stretches are compositionally biased toward polar residues: residues 177–191 (RLNT…SQLG) and 207–217 (AHSTKQTGGKE).

As to expression, preferentially expressed in teratocarcinoma rather than in normal testis.

The sequence is that of Protein TNT (C16orf82) from Homo sapiens (Human).